The primary structure comprises 164 residues: Phosphopantetheine adenylyltransferase (164 aa).

Ser9 is a substrate binding site. ATP is bound by residues 9–10 (SF) and His17. Lys41, Val78, and Arg92 together coordinate substrate. ATP is bound by residues 93 to 95 (GLR), Glu103, and 128 to 134 (VRTITAT).

This sequence belongs to the bacterial CoaD family. In terms of assembly, homohexamer. Mg(2+) serves as cofactor.

The protein localises to the cytoplasm. It carries out the reaction (R)-4'-phosphopantetheine + ATP + H(+) = 3'-dephospho-CoA + diphosphate. It participates in cofactor biosynthesis; coenzyme A biosynthesis; CoA from (R)-pantothenate: step 4/5. Functionally, reversibly transfers an adenylyl group from ATP to 4'-phosphopantetheine, yielding dephospho-CoA (dPCoA) and pyrophosphate. This is Phosphopantetheine adenylyltransferase from Brucella abortus (strain 2308).